A 108-amino-acid chain; its full sequence is Large ribosomal subunit protein uL24 (108 aa).

This sequence belongs to the universal ribosomal protein uL24 family. In terms of assembly, part of the 50S ribosomal subunit.

Functionally, one of two assembly initiator proteins, it binds directly to the 5'-end of the 23S rRNA, where it nucleates assembly of the 50S subunit. Its function is as follows. One of the proteins that surrounds the polypeptide exit tunnel on the outside of the subunit. This chain is Large ribosomal subunit protein uL24, found in Moorella thermoacetica (strain ATCC 39073 / JCM 9320).